The sequence spans 962 residues: Protein suppressor of underreplication (962 aa).

5 disordered regions span residues 353-413 (EIVT…TRAA), 438-590 (TPTP…LSGS), 658-712 (NSSH…SPDL), 866-900 (QERT…TQAT), and 916-962 (QTSS…ELFK). A compositionally biased stretch (basic residues) spans 372 to 382 (PRTKSKKKCSK). Over residues 386–395 (PCKEADLTDS) the composition is skewed to basic and acidic residues. 2 stretches are compositionally biased toward polar residues: residues 438–448 (TPTPSGATTAI) and 480–489 (LTRSAESKIN). The segment covering 524 to 552 (VKQESKAKAKPEQKKKIKTVDKPAQETPK) has biased composition (basic and acidic residues). Residues 553 to 562 (RKPGRPRKCK) show a composition bias toward basic residues. The span at 564–576 (LTETLGKSKTKPN) shows a compositional bias: polar residues. Over residues 673-683 (RRTKALKRKRK) the composition is skewed to basic residues. Composition is skewed to polar residues over residues 703-712 (RSATNKSPDL) and 866-880 (QERT…NSIV). A compositionally biased stretch (basic residues) spans 885 to 894 (KSPKSPKHGA). Positions 916-944 (QTSSVESVSAPSTPVNPSTSAAACQTRTA) are enriched in polar residues. Basic residues predominate over residues 953–962 (TKRKRLELFK).

Its subcellular location is the nucleus. The protein resides in the chromosome. Functionally, required for underreplication of DNA, which is found in many late replicating euchromatic regions of salivary gland polytene chromosomes. Controls chromatin organization in polytene chromosomes. The sequence is that of Protein suppressor of underreplication (SuUR) from Drosophila erecta (Fruit fly).